The sequence spans 209 residues: Superoxide dismutase [Mn/Fe] (209 aa).

Fe(3+) is bound by residues His38, His90, Asp172, and His176. Residues His38, His90, Asp172, and His176 each contribute to the Mn(2+) site.

This sequence belongs to the iron/manganese superoxide dismutase family. Mn(2+) serves as cofactor. Requires Fe(3+) as cofactor.

It carries out the reaction 2 superoxide + 2 H(+) = H2O2 + O2. Destroys superoxide anion radicals which are normally produced within the cells and which are toxic to biological systems. Catalyzes the dismutation of superoxide anion radicals into O2 and H2O2 by successive reduction and oxidation of the transition metal ion at the active site. The chain is Superoxide dismutase [Mn/Fe] (sodB) from Rickettsia conorii (strain ATCC VR-613 / Malish 7).